The sequence spans 102 residues: Small ribosomal subunit protein uS10 (102 aa).

This sequence belongs to the universal ribosomal protein uS10 family. Part of the 30S ribosomal subunit.

Its function is as follows. Involved in the binding of tRNA to the ribosomes. The chain is Small ribosomal subunit protein uS10 from Latilactobacillus sakei subsp. sakei (strain 23K) (Lactobacillus sakei subsp. sakei).